The primary structure comprises 132 residues: MCDAFVGTWKLVSSENFDDYMKEVGVGFATRKVAGMAKPNMIISVNGDVITIRSESTFKNTEISFKLGQEFDEVTADDRKVKSIITLDGGVLVQVQKWDGKSTTIKRKREDDKLVVECVMKGVTSTRVYERA.

Cysteine 2 bears the N-acetylcysteine mark. Serine 13 carries the post-translational modification Phosphoserine. Phosphotyrosine; by Tyr-kinases is present on tyrosine 20. Positions 22–32 match the Nuclear localization signal motif; sequence KEVGVGFATRK. Residue 127–129 coordinates a fatty acid; sequence RVY.

It belongs to the calycin superfamily. Fatty-acid binding protein (FABP) family. As to quaternary structure, monomer. Homodimer. Interacts with PPARG.

The protein resides in the cytoplasm. It localises to the nucleus. Lipid transport protein in adipocytes. Binds both long chain fatty acids and retinoic acid. Delivers long-chain fatty acids and retinoic acid to their cognate receptors in the nucleus. FABPs are important elements related to the hibernating state in mammals. The sequence is that of Fatty acid-binding protein, adipocyte (FABP4) from Ictidomys tridecemlineatus (Thirteen-lined ground squirrel).